A 301-amino-acid polypeptide reads, in one-letter code: Ribonuclease Z (301 aa).

The Zn(2+) site is built by H63, H65, D67, H68, H141, D204, and H262. D67 serves as the catalytic Proton acceptor.

This sequence belongs to the RNase Z family. Homodimer. The cofactor is Zn(2+).

It carries out the reaction Endonucleolytic cleavage of RNA, removing extra 3' nucleotides from tRNA precursor, generating 3' termini of tRNAs. A 3'-hydroxy group is left at the tRNA terminus and a 5'-phosphoryl group is left at the trailer molecule.. Functionally, zinc phosphodiesterase, which displays some tRNA 3'-processing endonuclease activity. Probably involved in tRNA maturation, by removing a 3'-trailer from precursor tRNA. The chain is Ribonuclease Z from Streptomyces coelicolor (strain ATCC BAA-471 / A3(2) / M145).